The primary structure comprises 52 residues: UPF0181 protein VPA0916 (52 aa).

The protein belongs to the UPF0181 family.

The polypeptide is UPF0181 protein VPA0916 (Vibrio parahaemolyticus serotype O3:K6 (strain RIMD 2210633)).